Consider the following 428-residue polypeptide: D-amino acid dehydrogenase (428 aa).

3–17 contributes to the FAD binding site; it reads VVILGSGVVGVASAY.

The protein belongs to the DadA oxidoreductase family. The cofactor is FAD.

The catalysed reaction is a D-alpha-amino acid + A + H2O = a 2-oxocarboxylate + AH2 + NH4(+). Its pathway is amino-acid degradation; D-alanine degradation; NH(3) and pyruvate from D-alanine: step 1/1. Functionally, oxidative deamination of D-amino acids. The polypeptide is D-amino acid dehydrogenase (Burkholderia cenocepacia (strain HI2424)).